Reading from the N-terminus, the 535-residue chain is Peptide chain release factor 3 (535 aa).

The 271-residue stretch at 8–278 folds into the tr-type G domain; it reads ARRRTFAIIS…VDQAPAPGPR (271 aa). GTP contacts are provided by residues 17 to 24, 85 to 89, and 139 to 142; these read SHPDAGKT, DTPGH, and NKLD.

This sequence belongs to the TRAFAC class translation factor GTPase superfamily. Classic translation factor GTPase family. PrfC subfamily.

It is found in the cytoplasm. Increases the formation of ribosomal termination complexes and stimulates activities of RF-1 and RF-2. It binds guanine nucleotides and has strong preference for UGA stop codons. It may interact directly with the ribosome. The stimulation of RF-1 and RF-2 is significantly reduced by GTP and GDP, but not by GMP. This Bordetella bronchiseptica (strain ATCC BAA-588 / NCTC 13252 / RB50) (Alcaligenes bronchisepticus) protein is Peptide chain release factor 3.